The chain runs to 371 residues: Transcription factor bHLH77 (371 aa).

Disordered stretches follow at residues 1 to 25 (MNMD…FGNG), 65 to 206 (SGGI…SLAE), and 352 to 371 (QSNN…KLEP). A compositionally biased stretch (polar residues) spans 85–96 (SQPTTQESNKSS). Over residues 128-142 (SPASSSLTASNSKVS) the composition is skewed to low complexity. Positions 165–190 (GVEKCDSKGDNKDDAKPPEAPKDYIH) are enriched in basic and acidic residues. The bHLH domain occupies 197 to 247 (QATDSHSLAERARREKISERMTLLQDLVPGCNRITGKAVMLDEIINYVQSL).

As to quaternary structure, homodimer. Interacts with IBH1. Expressed constitutively in roots, leaves, stems, and flowers.

It localises to the nucleus. This is Transcription factor bHLH77 (BHLH77) from Arabidopsis thaliana (Mouse-ear cress).